The chain runs to 461 residues: PE-PGRS family protein PE_PGRS45 (461 aa).

In terms of domain architecture, PE spans 4 to 92; that stretch reads VNVAPQLVST…GSTYAVAEAA (89 aa). Disordered stretches follow at residues 232 to 251 and 426 to 461; these read GGAG…GGNG and AGSL…GADG. Over residues 434–446 the composition is skewed to gly residues; it reads PGFGGPGGSGGAS.

The protein belongs to the mycobacterial PE family. PGRS subfamily. Interacts with human TIMM23, which is part of a complex that mediates the translocation of transit peptide-containing proteins across the mitochondrial inner membrane.

The protein resides in the cell membrane. Its subcellular location is the secreted. It localises to the cell wall. The protein localises to the host mitochondrion. It carries out the reaction hexadecanal + NADP(+) + CoA = hexadecanoyl-CoA + NADPH + H(+). Its activity is regulated as follows. Oxidoreductase activity is inhibited by the first line anti-tubercular drug isoniazid (INH). May be an effector protein that contributes to pathogenesis by targeting host mitochondria, where it modulates host cellular processes. In THP1 macrophages, increases the ADP-to-ATP ratio and increases the cellular ROS levels. Also induces mitochondrial perturbations through membrane depolarization, release of mitochondrial superoxide, up-regulation of expression of host proapoptotic proteins (BAX and BIM) and release of cytochrome C into the cytosol. May bind calcium to increase intracellular calcium influx, which may further lead to mitochondrial perturbations. Mitochondrial perturbations and alteration of Ca(2+) influx are independent but simultaneous events. In terms of biological role, in vitro, shows NADPH-dependent fatty acyl coenzyme A oxidoreductase activity. Can oxidize palmitoyl-CoA, but not glutathione and thiourea. The protein is PE-PGRS family protein PE_PGRS45 of Mycobacterium tuberculosis (strain ATCC 25618 / H37Rv).